Reading from the N-terminus, the 867-residue chain is Xylosyltransferase 2 (867 aa).

The Cytoplasmic portion of the chain corresponds to 1 to 15 (MVASARVQKLVRRYK). The chain crosses the membrane as a helical; Signal-anchor for type II membrane protein span at residues 16–36 (LAIATALAILLLQGLVVWSFS). Residues 37 to 867 (VLEDDEPGEK…GPVKADGRLR (831 aa)) are Lumenal-facing. A disordered region spans residues 41–122 (DEPGEKGRQK…PPPEAPGRQN (82 aa)). Positions 53–65 (RPLDPSEGSKDTD) are enriched in basic and acidic residues. Residues 73-82 (SAGRRHGRWR) are compositionally biased toward basic residues. The N-linked (GlcNAc...) asparagine glycan is linked to Asn122. Disulfide bonds link Cys161–Cys189 and Cys205–Cys447. Residues Val238, Asp266, and 295 to 297 (TIW) contribute to the UDP-alpha-D-xylose site. N-linked (GlcNAc...) asparagine glycosylation is present at Asn326. UDP-alpha-D-xylose is bound by residues 399-400 (DW), Ser480, and 503-504 (RK). 2 cysteine pairs are disulfide-bonded: Cys580-Cys835 and Cys828-Cys841. N-linked (GlcNAc...) asparagine glycosylation is present at Asn685.

It belongs to the glycosyltransferase 14 family. XylT subfamily. Monomer. Mg(2+) is required as a cofactor. Mn(2+) serves as cofactor. In terms of processing, contains disulfide bonds.

The protein localises to the golgi apparatus membrane. Its subcellular location is the secreted. The catalysed reaction is UDP-alpha-D-xylose + L-seryl-[protein] = 3-O-(beta-D-xylosyl)-L-seryl-[protein] + UDP + H(+). It participates in glycan metabolism; chondroitin sulfate biosynthesis. Its pathway is glycan metabolism; heparan sulfate biosynthesis. Catalyzes the first step in the biosynthesis of chondroitin sulfate, heparan sulfate and dermatan sulfate proteoglycans, such as DCN. Transfers D-xylose from UDP-D-xylose to specific serine residues of the core protein. The polypeptide is Xylosyltransferase 2 (XYLT2) (Bos taurus (Bovine)).